The primary structure comprises 651 residues: Mitogen-activated protein kinase kinase kinase 3 (651 aa).

One can recognise a Protein kinase domain in the interval 68–330 (WRKGELIGCG…ATELLQHPFV (263 aa)). Residues 74–82 (IGCGAFGRV) and Lys-97 contribute to the ATP site. Residues 105–130 (SASKEKTQGHIRELEEEVQLLKNLSH) are a coiled coil. Glycyl lysine isopeptide (Lys-Gly) (interchain with G-Cter in ubiquitin) cross-links involve residues Lys-108 and Lys-110. Asp-196 acts as the Proton acceptor in catalysis. Residues 573-608 (MPSPLKSSKRTLNTSRVMQSGTEPTQVNESTKKGVN) form a disordered region. Polar residues predominate over residues 582–608 (RTLNTSRVMQSGTEPTQVNESTKKGVN). A coiled-coil region spans residues 618–641 (RKWEEELYEELERHRENLRHAGAG).

This sequence belongs to the protein kinase superfamily. STE Ser/Thr protein kinase family. MAP kinase kinase kinase subfamily. Interacts with NACK2 and MKK6. Expressed in roots and flowers.

It is found in the cytoplasm. Its subcellular location is the cytoskeleton. The enzyme catalyses L-seryl-[protein] + ATP = O-phospho-L-seryl-[protein] + ADP + H(+). It catalyses the reaction L-threonyl-[protein] + ATP = O-phospho-L-threonyl-[protein] + ADP + H(+). Its function is as follows. Involved in cortical microtubules organization and stabilization by regulating the phosphorylation state of microtubule-associated proteins such as MAP65-1. This Arabidopsis thaliana (Mouse-ear cress) protein is Mitogen-activated protein kinase kinase kinase 3 (ANP3).